The primary structure comprises 225 residues: tRNA (guanine-N(1)-)-methyltransferase (225 aa).

Residues Gly-112 and 132–137 (IGDYVL) each bind S-adenosyl-L-methionine.

The protein belongs to the RNA methyltransferase TrmD family. As to quaternary structure, homodimer.

The protein resides in the cytoplasm. The enzyme catalyses guanosine(37) in tRNA + S-adenosyl-L-methionine = N(1)-methylguanosine(37) in tRNA + S-adenosyl-L-homocysteine + H(+). In terms of biological role, specifically methylates guanosine-37 in various tRNAs. The sequence is that of tRNA (guanine-N(1)-)-methyltransferase from Bacteroides thetaiotaomicron (strain ATCC 29148 / DSM 2079 / JCM 5827 / CCUG 10774 / NCTC 10582 / VPI-5482 / E50).